We begin with the raw amino-acid sequence, 230 residues long: 5'-methylthioadenosine/S-adenosylhomocysteine nucleosidase (230 aa).

The Proton acceptor role is filled by glutamate 12. Substrate is bound by residues glycine 78, methionine 153, and 174–175 (ME). Aspartate 198 (proton donor) is an active-site residue.

The protein belongs to the PNP/UDP phosphorylase family. MtnN subfamily.

The enzyme catalyses S-adenosyl-L-homocysteine + H2O = S-(5-deoxy-D-ribos-5-yl)-L-homocysteine + adenine. It catalyses the reaction S-methyl-5'-thioadenosine + H2O = 5-(methylsulfanyl)-D-ribose + adenine. It carries out the reaction 5'-deoxyadenosine + H2O = 5-deoxy-D-ribose + adenine. It participates in amino-acid biosynthesis; L-methionine biosynthesis via salvage pathway; S-methyl-5-thio-alpha-D-ribose 1-phosphate from S-methyl-5'-thioadenosine (hydrolase route): step 1/2. Catalyzes the irreversible cleavage of the glycosidic bond in both 5'-methylthioadenosine (MTA) and S-adenosylhomocysteine (SAH/AdoHcy) to adenine and the corresponding thioribose, 5'-methylthioribose and S-ribosylhomocysteine, respectively. Also cleaves 5'-deoxyadenosine, a toxic by-product of radical S-adenosylmethionine (SAM) enzymes, into 5-deoxyribose and adenine. This is 5'-methylthioadenosine/S-adenosylhomocysteine nucleosidase from Tolumonas auensis (strain DSM 9187 / NBRC 110442 / TA 4).